Reading from the N-terminus, the 199-residue chain is Peptidyl-tRNA hydrolase (199 aa).

Tyr-18 lines the tRNA pocket. His-23 serves as the catalytic Proton acceptor. Tyr-69, Asn-71, and Asn-117 together coordinate tRNA.

The protein belongs to the PTH family. In terms of assembly, monomer.

It is found in the cytoplasm. It carries out the reaction an N-acyl-L-alpha-aminoacyl-tRNA + H2O = an N-acyl-L-amino acid + a tRNA + H(+). Hydrolyzes ribosome-free peptidyl-tRNAs (with 1 or more amino acids incorporated), which drop off the ribosome during protein synthesis, or as a result of ribosome stalling. Functionally, catalyzes the release of premature peptidyl moieties from peptidyl-tRNA molecules trapped in stalled 50S ribosomal subunits, and thus maintains levels of free tRNAs and 50S ribosomes. This Prochlorococcus marinus (strain MIT 9515) protein is Peptidyl-tRNA hydrolase.